Reading from the N-terminus, the 355-residue chain is Blue-sensitive opsin (355 aa).

Over 1–41 (MKSRPQEFQEDFYIPIPLDTNNITALSPFLVPQDHLGGSGI) the chain is Extracellular. Asparagine 22 carries N-linked (GlcNAc...) asparagine glycosylation. A helical transmembrane segment spans residues 42–66 (FMIMTVFMLFLFIGGTSINVLTIVC). At 67 to 78 (TVQYKKLRSHLN) the chain is on the cytoplasmic side. Residues 79–104 (YILVNLAISNLLVSTVGSFTAFVSFL) form a helical membrane-spanning segment. Over 105 to 118 (NRYFIFGPTACKIE) the chain is Extracellular. Cysteine 115 and cysteine 192 are disulfide-bonded. Residues 119 to 138 (GFVATLGGMVSLWSLSVVAF) traverse the membrane as a helical segment. At 139-157 (ERWLVICKPVGNFSFKGTH) the chain is on the cytoplasmic side. A helical transmembrane segment spans residues 158–181 (AIIGCALTWFFALLASTPPLFGWS). Residues 182-207 (RYIPEGLQCSCGPDWYTTENKYNNES) lie on the Extracellular side of the membrane. Residue asparagine 205 is glycosylated (N-linked (GlcNAc...) asparagine). Residues 208–235 (YVMFLFCFCFGFPFTVILFCYGQLLFTL) traverse the membrane as a helical segment. Residues 236 to 257 (KSAAKAQADSASTQKAEREVTK) are Cytoplasmic-facing. The chain crosses the membrane as a helical span at residues 258–281 (MVVVMVMGFLVCWLPYASFALWVV). Over 282–289 (FNRGQSFD) the chain is Extracellular. Residues 290 to 314 (LRLGTIPSCFSKASTVYNPVIYVFM) traverse the membrane as a helical segment. An N6-(retinylidene)lysine modification is found at lysine 301. At 315–355 (NKQFRSCMMKLIFCGKSPFGDDEEASSSSQVTQVSSVGPEK) the chain is on the cytoplasmic side. The disordered stretch occupies residues 334–355 (GDDEEASSSSQVTQVSSVGPEK). Over residues 340–355 (SSSSQVTQVSSVGPEK) the composition is skewed to low complexity.

Belongs to the G-protein coupled receptor 1 family. Opsin subfamily. Phosphorylated on some or all of the serine and threonine residues present in the C-terminal region. In terms of tissue distribution, the color pigments are found in the cone photoreceptor cells.

It localises to the membrane. In terms of biological role, visual pigments are the light-absorbing molecules that mediate vision. They consist of an apoprotein, opsin, covalently linked to cis-retinal. In Psalidodon fasciatus (Banded astyanax), this protein is Blue-sensitive opsin (B23).